The chain runs to 398 residues: Galactose-3-O-sulfotransferase 2 (398 aa).

At 1-10 (MMSMLGGLQR) the chain is on the cytoplasmic side. A helical; Signal-anchor for type II membrane protein membrane pass occupies residues 11 to 31 (YFRVILLLLLALTLLLLAGFL). At 32-398 (HSDLELDTPL…PLKNIPFLGA (367 aa)) the chain is on the lumenal side. Residues N79, N132, N179, N287, N330, and N360 are each glycosylated (N-linked (GlcNAc...) asparagine).

This sequence belongs to the galactose-3-O-sulfotransferase family. Ubiquitous. Detected in heart, stomach, colon, liver and spleen, in epithelial cells lining the lower to middle layer of the crypts in colonic mucosa, hepatocytes surrounding the central vein of the liver, extravillous cytotrophoblasts in the basal plate of the septum of the placenta, renal tubules of the kidney, and neuronal cells of the cerebral cortex.

It localises to the golgi apparatus. The protein localises to the golgi stack membrane. It functions in the pathway protein modification; carbohydrate sulfation. Its activity is regulated as follows. Strongly inhibited by Cu(2+) and Zn(2+). Transfers a sulfate group to the hydroxyl group at C3 of non-reducing beta-galactosyl residues. Acts both on type 1 (Gal-beta-1,3-GlcNAc) and type 2 (Gal-beta-1,4-GlcNAc) chains with similar efficiency. The protein is Galactose-3-O-sulfotransferase 2 (GAL3ST2) of Homo sapiens (Human).